The primary structure comprises 1010 residues: Trifunctional purine biosynthetic protein adenosine-3 (1010 aa).

The residue at position 2 (A2) is an N-acetylalanine. S10 carries the post-translational modification Phosphoserine. One can recognise an ATP-grasp domain in the interval K111–D318. Residues E190–L193, E197, R220, and N229 each bind ATP. Mg(2+)-binding residues include E288 and N290. K350 bears the N6-acetyllysine mark. The AIRS domain stretch occupies residues S434–R809. The residue at position 440 (S440) is a Phosphoserine. T682 bears the Phosphothreonine mark. Phosphoserine is present on residues S796 and S802. The segment at V810–E1010 is GART domain. G818–N820 is a binding site for N(1)-(5-phospho-beta-D-ribosyl)glycinamide. (6R)-10-formyltetrahydrofolate contacts are provided by residues R871, M896–L899, and N913. The Proton donor role is filled by H915. A947–D951 is a binding site for (6R)-10-formyltetrahydrofolate. K977–E980 is a binding site for N(1)-(5-phospho-beta-D-ribosyl)glycinamide.

This sequence in the N-terminal section; belongs to the GARS family. In the central section; belongs to the AIR synthase family. The protein in the C-terminal section; belongs to the GART family. Homodimer. Mg(2+) is required as a cofactor. It depends on Mn(2+) as a cofactor.

The catalysed reaction is 5-phospho-beta-D-ribosylamine + glycine + ATP = N(1)-(5-phospho-beta-D-ribosyl)glycinamide + ADP + phosphate + H(+). It catalyses the reaction N(1)-(5-phospho-beta-D-ribosyl)glycinamide + (6R)-10-formyltetrahydrofolate = N(2)-formyl-N(1)-(5-phospho-beta-D-ribosyl)glycinamide + (6S)-5,6,7,8-tetrahydrofolate + H(+). The enzyme catalyses 2-formamido-N(1)-(5-O-phospho-beta-D-ribosyl)acetamidine + ATP = 5-amino-1-(5-phospho-beta-D-ribosyl)imidazole + ADP + phosphate + H(+). Its pathway is purine metabolism; IMP biosynthesis via de novo pathway; 5-amino-1-(5-phospho-D-ribosyl)imidazole from N(2)-formyl-N(1)-(5-phospho-D-ribosyl)glycinamide: step 2/2. It functions in the pathway purine metabolism; IMP biosynthesis via de novo pathway; N(1)-(5-phospho-D-ribosyl)glycinamide from 5-phospho-alpha-D-ribose 1-diphosphate: step 2/2. The protein operates within purine metabolism; IMP biosynthesis via de novo pathway; N(2)-formyl-N(1)-(5-phospho-D-ribosyl)glycinamide from N(1)-(5-phospho-D-ribosyl)glycinamide (10-formyl THF route): step 1/1. Trifunctional enzyme that catalyzes three distinct reactions as part of the 'de novo' inosine monophosphate biosynthetic pathway. In Homo sapiens (Human), this protein is Trifunctional purine biosynthetic protein adenosine-3 (GART).